The following is a 117-amino-acid chain: Putative pterin-4-alpha-carbinolamine dehydratase (117 aa).

It belongs to the pterin-4-alpha-carbinolamine dehydratase family.

It carries out the reaction (4aS,6R)-4a-hydroxy-L-erythro-5,6,7,8-tetrahydrobiopterin = (6R)-L-erythro-6,7-dihydrobiopterin + H2O. This is Putative pterin-4-alpha-carbinolamine dehydratase from Azoarcus sp. (strain BH72).